The primary structure comprises 150 residues: MSDSVELFTDGACKGNPGPGGWGALLVCKGVEKELWGGEANTTNNRMELTGAIRGLEELKRPCEVTLVTDSQYVMKGITEWMVNWKKRGWKTAAKEPVKNADLWQLLDEQVSRHTVKWQWVRGHIGHPGNERADQLANRGVDEVRGIRHG.

The region spanning 1–142 (MSDSVELFTD…ADQLANRGVD (142 aa)) is the RNase H type-1 domain. Mg(2+) contacts are provided by Asp-10, Glu-48, Asp-70, and Asp-134.

The protein belongs to the RNase H family. As to quaternary structure, monomer. Requires Mg(2+) as cofactor.

The protein resides in the cytoplasm. It catalyses the reaction Endonucleolytic cleavage to 5'-phosphomonoester.. Endonuclease that specifically degrades the RNA of RNA-DNA hybrids. This is Ribonuclease H from Pseudomonas syringae pv. syringae (strain B728a).